The primary structure comprises 397 residues: Enoyl-[acyl-carrier-protein] reductase [NADH] (397 aa).

NAD(+)-binding positions include 48–53 (GASTGY), 74–75 (FE), 111–112 (DA), and 139–140 (LA). Position 225 (Y225) interacts with substrate. Catalysis depends on Y235, which acts as the Proton donor. NAD(+) contacts are provided by residues K244 and 273 to 275 (VVT).

Belongs to the TER reductase family. Monomer.

It carries out the reaction a 2,3-saturated acyl-[ACP] + NAD(+) = a (2E)-enoyl-[ACP] + NADH + H(+). The protein operates within lipid metabolism; fatty acid biosynthesis. Involved in the final reduction of the elongation cycle of fatty acid synthesis (FAS II). Catalyzes the reduction of a carbon-carbon double bond in an enoyl moiety that is covalently linked to an acyl carrier protein (ACP). The protein is Enoyl-[acyl-carrier-protein] reductase [NADH] of Edwardsiella ictaluri (strain 93-146).